Reading from the N-terminus, the 995-residue chain is Polyprotein nsP1234 (995 aa).

Residues G30 and F32 each coordinate ADP-D-ribose. Zn(2+)-binding residues include C180, C182, C205, and C223. 2 consecutive short sequence motifs (FGDF; binding to host G3BP1) follow at residues 347 to 350 (FGDL) and 364 to 367 (FGDF). Positions 749-864 (DAVLETDIAS…HGVKSDKLLA (116 aa)) constitute a RdRp catalytic domain.

Interacts with mRNA-capping enzyme nsP1. Interacts with host DDX1. Interacts with host DDX3. Interacts (via C-terminus) with host G3BP1; this interaction inhibits the formation of host stress granules on viral mRNAs and the nsp3-G3BP1 complexes bind viral RNAs and probably orchestrate the assembly of viral replication complexes. Interacts (via C-terminus) with host G3BP2; this interaction inhibits the formation of host stress granules on viral mRNAs and the nsp3-G3BP2 complexes bind viral RNAs and probably orchestrate the assembly of viral replication complexes. In terms of assembly, interacts with mRNA-capping enzyme nsP1. Interacts with protease nsP2. interacts with itself. The cofactor is Mg(2+). Requires Mn(2+) as cofactor. Polyprotein P1234: Specific enzymatic cleavages in vivo yield mature proteins. The processing of the polyprotein is temporally regulated. In early stages (1.7 hpi), P1234 is first cleaved in trans through its nsP2 protease activity, releasing P123' and nsP4, which associate to form the early replication complex. At the same time, P1234 is also cut at the nsP1/nsP2 site early in infection but with lower efficiency. After replication of the viral minus-strand RNAs (4 hpi), the polyproteins are cut at the nsP1/nsP2 and nsP2/nsP3 sites very efficiently, preventing accumulation of P123' and P1234 and allowing the formation of the late replication complex. NsP3'/nsP4 site is not cleaved anymore and P34 is produced rather than nsP4. Post-translationally, specific enzymatic cleavages in vivo yield mature proteins. The processing of the polyprotein is temporally regulated. In early stages (1.7 hpi), P123 is cleaved at the nsP1/nsP2 site with low efficiency. After replication of the viral minus-strand RNAs (4 hpi), the polyproteins are cut at the nsP1/nsP2 and nsP2/nsP3 sites very efficiently, preventing accumulation of P123 and allowing the formation of the late replication complex. In terms of processing, specific enzymatic cleavages in vivo yield mature proteins. The processing of the polyprotein is temporally regulated. In early stages (1.7 hpi), P123' is cleaved at the nsP1/nsP2 site with low efficiency. After replication of the viral minus-strand RNAs (4 hpi), the polyproteins are cut at the nsP1/nsP2 and nsP2/nsP3 sites very efficiently, preventing accumulation of P123' and allowing the formation of the late replication complex. Phosphorylated by host on serines and threonines. Post-translationally, ubiquitinated; targets the protein for rapid degradation via the ubiquitin system. Nsp4 is present in extremely low quantities due to low frequency of translation through the amber stop-codon and the degradation by the ubiquitin pathway.

Its subcellular location is the host cytoplasmic vesicle membrane. It catalyses the reaction RNA(n) + a ribonucleoside 5'-triphosphate = RNA(n+1) + diphosphate. It carries out the reaction RNA(n) + ATP = RNA(n)-3'-adenine ribonucleotide + diphosphate. The catalysed reaction is 4-O-(ADP-D-ribosyl)-L-aspartyl-[protein] + H2O = L-aspartyl-[protein] + ADP-D-ribose + H(+). The enzyme catalyses 5-O-(ADP-D-ribosyl)-L-glutamyl-[protein] + H2O = L-glutamyl-[protein] + ADP-D-ribose + H(+). It catalyses the reaction ADP-alpha-D-ribose 1''-phosphate + H2O = ADP-D-ribose + phosphate. Functionally, polyprotein P1234: Inactive precursor of the viral replicase, which is activated by cleavages carried out by the viral protease nsP2. Its function is as follows. The early replication complex formed by the polyprotein P123 and nsP4 synthesizes minus-strand RNAs. As soon P123 is cleaved into mature proteins, the plus-strand RNAs synthesis begins. The early replication complex formed by the polyprotein P123' and nsP4 synthesizes minus-strand RNAs. Polyprotein P123' is a short-lived polyprotein that accumulates during early stage of infection. As soon P123' is cleaved into mature proteins, the plus-strand RNAs synthesis begins. In terms of biological role, seems to be essential for minus-strand RNAs and subgenomic 26S mRNAs synthesis. Displays mono-ADP-ribosylhydrolase activity. ADP-ribosylation is a post-translational modification that controls various processes of the host cell and the virus probably needs to revert it for optimal viral replication. Binds proteins of FXR family and sequesters them into the viral RNA replication complexes thereby inhibiting the formation of host stress granules on viral mRNAs. The nsp3'-FXR complexes bind viral RNAs and probably orchestrate the assembly of viral replication complexes, thanks to the ability of FXR family members to self-assemble and bind DNA. Functionally, seems to be essential for minus-strand RNAs and subgenomic 26S mRNAs synthesis. Displays mono-ADP-ribosylhydrolase activity. ADP-ribosylation is a post-translantional modification that controls various processes of the host cell and the virus probably needs to revert it for optimal viral replication. Binds proteins of G3BP family and sequesters them into the viral RNA replication complexes thereby inhibiting the formation of host stress granules on viral mRNAs. The nsp3-G3BP complexes bind viral RNAs and probably orchestrate the assembly of viral replication complexes, thanks to the ability of G3BP family members to self-assemble and bind DNA. Its function is as follows. RNA dependent RNA polymerase. Replicates genomic and antigenomic RNA by recognizing replications specific signals. The early replication complex formed by the polyprotein P123 and nsP4 synthesizes minus-strand RNAs. The late replication complex composed of fully processed nsP1-nsP4 is responsible for the production of genomic and subgenomic plus-strand RNAs. The core catalytic domain of nsP4 also possesses terminal adenylyltransferase (TATase) activity that is probably involved in maintenance and repair of the poly(A) tail, an element required for replication of the viral genome. In Middelburg virus, this protein is Polyprotein nsP1234.